We begin with the raw amino-acid sequence, 438 residues long: Nudix hydrolase 19, chloroplastic (438 aa).

The transit peptide at 1–36 directs the protein to the chloroplast; that stretch reads MLALFLSSSSYPTLSFLSRSVTLNLARTTTLSALTM. Zn(2+)-binding residues include cysteine 212, cysteine 215, cysteine 230, and cysteine 235. Substrate contacts are provided by residues tyrosine 240, 276 to 278, glutamate 292, glutamate 296, and glutamate 342; that span reads AGF. Residues 241-371 enclose the Nudix hydrolase domain; the sequence is PRVDPVVIML…EYRKAQRTAA (131 aa). Residues alanine 276, glutamate 292, glutamate 296, and glutamate 342 each contribute to the Mg(2+) site. The Nudix box motif lies at 277 to 298; that stretch reads GFIEPGESLEEAVRRETWEETG. Residues 422-424 carry the Microbody targeting signal motif; it reads PDD.

This sequence belongs to the Nudix hydrolase family. NudC subfamily. It depends on Mg(2+) as a cofactor. Requires Zn(2+) as cofactor. As to expression, expressed in roots, leaves, stems and inflorescences.

The protein localises to the plastid. It localises to the chloroplast. The enzyme catalyses a 5'-end NAD(+)-phospho-ribonucleoside in mRNA + H2O = a 5'-end phospho-adenosine-phospho-ribonucleoside in mRNA + beta-nicotinamide D-ribonucleotide + 2 H(+). It catalyses the reaction NAD(+) + H2O = beta-nicotinamide D-ribonucleotide + AMP + 2 H(+). The catalysed reaction is NADH + H2O = reduced beta-nicotinamide D-ribonucleotide + AMP + 2 H(+). Its function is as follows. mRNA decapping enzyme that specifically removes the nicotinamide adenine dinucleotide (NAD) cap from a subset of mRNAs by hydrolyzing the diphosphate linkage to produce nicotinamide mononucleotide (NMN) and 5' monophosphate mRNA. The NAD-cap is present at the 5'-end of some RNAs; in contrast to the canonical N7 methylguanosine (m7G) cap, the NAD cap promotes mRNA decay. Mediates the hydrolysis of some nucleoside diphosphate derivatives. Has a high affinity for NADPH compared with that for NADH. This is Nudix hydrolase 19, chloroplastic (NUDT19) from Arabidopsis thaliana (Mouse-ear cress).